The sequence spans 285 residues: Trypsin Tyr p 3.0101 (285 aa).

An N-terminal signal peptide occupies residues 1–16 (MKILLFLCFLVSVAFA). Residues 17–33 (KPPTIQLKSNTKSQNGF) constitute a propeptide that is removed on maturation. The Peptidase S1 domain maps to 34–262 (IVGGTEAVDG…YLDWIELSAK (229 aa)). Cys-58 and Cys-74 are oxidised to a cystine. Catalysis depends on charge relay system residues His-73 and Asp-120. Intrachain disulfides connect Cys-186–Cys-202 and Cys-214–Cys-238. Ser-218 acts as the Charge relay system in catalysis.

It belongs to the peptidase S1 family.

It is found in the secreted. It catalyses the reaction Preferential cleavage: Arg-|-Xaa, Lys-|-Xaa.. Its activity is regulated as follows. Inhibited by the serine protease inhibitor phenylmethylsulfonyl, and trypsin inhibitors soybean trypsin inhibitor and tosyllysine chloromethyl ketone. Not inhibited by dithiothreitol, a cysteine protease inhibitor. Its function is as follows. Digests TAMe (p-toluene arginine methyl ester), but not ethyl N-benzoyl-L-tyrosinate (BTEE). This is Trypsin Tyr p 3.0101 from Tyrophagus putrescentiae (Mold mite).